Consider the following 123-residue polypeptide: Ribosome-binding factor A (123 aa).

This sequence belongs to the RbfA family. Monomer. Binds 30S ribosomal subunits, but not 50S ribosomal subunits or 70S ribosomes.

The protein localises to the cytoplasm. Its function is as follows. One of several proteins that assist in the late maturation steps of the functional core of the 30S ribosomal subunit. Associates with free 30S ribosomal subunits (but not with 30S subunits that are part of 70S ribosomes or polysomes). Required for efficient processing of 16S rRNA. May interact with the 5'-terminal helix region of 16S rRNA. The chain is Ribosome-binding factor A from Chlamydia trachomatis serovar L2 (strain ATCC VR-902B / DSM 19102 / 434/Bu).